We begin with the raw amino-acid sequence, 839 residues long: Vacuolar protein sorting-associated protein 16 homolog (839 aa).

A 3'-nitrotyrosine modification is found at Tyr4. Residues 642–736 are interaction with VPS33A; the sequence is ERIEGRVAAL…WWLKLAALAD (95 aa).

It belongs to the VPS16 family. As to quaternary structure, core component of at least two putative endosomal tethering complexes, the homotypic fusion and vacuole protein sorting (HOPS) complex and the class C core vacuole/endosome tethering (CORVET) complex. Their common core is composed of the class C Vps proteins VPS11, VPS16, VPS18 and VPS33A, which in HOPS further associates with VPS39 and VPS41 and in CORVET with VPS8 and TGFBRAP1. Interacts with RAB5C. Interacts with STX17, MON1B. Associates with adapter protein complex 3 (AP-3) and clathrin:AP-3 complexes.

The protein resides in the late endosome membrane. It localises to the lysosome membrane. Its subcellular location is the early endosome. The protein localises to the cytoplasmic vesicle. It is found in the clathrin-coated vesicle. The protein resides in the autophagosome. In terms of biological role, plays a role in vesicle-mediated protein trafficking to lysosomal compartments including the endocytic membrane transport and autophagic pathways. Believed to act as a core component of the putative HOPS and CORVET endosomal tethering complexes which are proposed to be involved in the Rab5-to-Rab7 endosome conversion probably implicating MON1A/B, and via binding SNAREs and SNARE complexes to mediate tethering and docking events during SNARE-mediated membrane fusion. The HOPS complex is proposed to be recruited to Rab7 on the late endosomal membrane and to regulate late endocytic, phagocytic and autophagic traffic towards lysosomes. The CORVET complex is proposed to function as a Rab5 effector to mediate early endosome fusion probably in specific endosome subpopulations. Required for recruitment of VPS33A to the HOPS complex. Required for fusion of endosomes and autophagosomes with lysosomes; the function is dependent on its association with VPS33A but not VPS33B. The function in autophagosome-lysosome fusion implicates STX17 but not UVRAG. The polypeptide is Vacuolar protein sorting-associated protein 16 homolog (Vps16) (Mus musculus (Mouse)).